The following is a 119-amino-acid chain: Polyhedrin (119 aa).

Belongs to the polyhedrin family.

Its function is as follows. Major component of the virus occlusion bodies, which are large proteinaceous structures (polyhedra), that protect the virus from the outside environment for extended periods until they are ingested by insect larvae. This is Polyhedrin (PH) from Antheraea pernyi nuclear polyhedrosis virus (ApNPV).